The primary structure comprises 205 residues: Coatomer subunit zeta-2 (205 aa).

Positions 1–12 (MQRPEAWPRPHP) are enriched in basic and acidic residues. Residues 1–33 (MQRPEAWPRPHPGEGASAAQAGGAAPPTRATEQ) are disordered. Residues 13–30 (GEGASAAQAGGAAPPTRA) show a composition bias toward low complexity.

It belongs to the adaptor complexes small subunit family. Oligomeric complex.

It localises to the cytoplasm. The protein localises to the cytosol. Its subcellular location is the endoplasmic reticulum-Golgi intermediate compartment membrane. The protein resides in the golgi apparatus membrane. It is found in the cytoplasmic vesicle. It localises to the COPI-coated vesicle membrane. In terms of biological role, the coatomer is a cytosolic protein complex that binds to dilysine motifs and reversibly associates with Golgi non-clathrin-coated vesicles, which further mediate biosynthetic protein transport from the ER, via the Golgi up to the trans Golgi network. Coatomer complex is required for budding from Golgi membranes, and is essential for the retrograde Golgi-to-ER transport of dilysine-tagged proteins. The zeta subunit may be involved in regulating the coat assembly and, hence, the rate of biosynthetic protein transport due to its association-dissociation properties with the coatomer complex. The chain is Coatomer subunit zeta-2 (Copz2) from Mus musculus (Mouse).